A 95-amino-acid chain; its full sequence is Small ribosomal subunit protein bS6 (95 aa).

Belongs to the bacterial ribosomal protein bS6 family.

Functionally, binds together with bS18 to 16S ribosomal RNA. The polypeptide is Small ribosomal subunit protein bS6 (Thermoanaerobacter pseudethanolicus (strain ATCC 33223 / 39E) (Clostridium thermohydrosulfuricum)).